Here is a 55-residue protein sequence, read N- to C-terminus: Methylmalonyl-CoA decarboxylase subunit epsilon (55 aa).

In terms of assembly, the methylmalonyl-CoA decarboxylase is composed of five subunits: the carboxyltransferase alpha subunit (MmdA), the tunnel beta subunit (MmdB), the biotin-containing gamma subunit (MmdC), and the delta (MmdD) and epsilon (MmdE) subunits.

The protein localises to the cell membrane. The catalysed reaction is (S)-methylmalonyl-CoA + Na(+)(in) + H(+)(out) = propanoyl-CoA + Na(+)(out) + CO2. With respect to regulation, completely inhibited by avidin. In terms of biological role, subunit of the sodium ion pump methylmalonyl-CoA decarboxylase, which converts the chemical energy of a decarboxylation reaction into an electrochemical gradient of Na(+) ions across the cytoplasmic membrane, thereby creating a sodium ion motive force that is used for ATP synthesis. The epsilon subunit seems not important for the catalysis of either decarboxylation or Na(+) transport, but it improves binding of the alpha subunit and plays an important role in stabilizing the methylmalonyl-CoA-decarboxylase enzyme complex. Can also convert malonyl-CoA into acetyl-CoA. This chain is Methylmalonyl-CoA decarboxylase subunit epsilon, found in Veillonella parvula (Staphylococcus parvulus).